Consider the following 165-residue polypeptide: Iron sulfur cluster assembly protein 1, mitochondrial (165 aa).

The transit peptide at 1-27 (MLPVITRFARPALMAIRPVNAMGVLRA) directs the protein to the mitochondrion. The tract at residues 132–136 (LPPVK) is SSQ1 binding region.

This sequence belongs to the NifU family. Homodimer, but can exist as monomers or trimers. Oligomerization may be regulated by Zn(2+) availability. Component of the core Fe-S cluster (ISC) assembly machinery. Interacts with YFH1/frataxin with a 1 to 1 stoichiometry; the interaction is direct. Interacts with the mitochondrial co-chaperones JAC1 and SSQ1. Interacts with NFS1. Interacts with YAH1/ferredoxin; interacts with the reduced form. The cofactor is [2Fe-2S] cluster. It depends on Zn(2+) as a cofactor.

It localises to the mitochondrion matrix. It participates in cofactor biosynthesis; iron-sulfur cluster biosynthesis. Its function is as follows. Scaffold protein for the de novo synthesis of iron-sulfur (Fe-S) clusters within mitochondria, which is required for maturation of both mitochondrial and cytoplasmic [2Fe-2S] and [4Fe-4S] proteins. First, a [2Fe-2S] cluster is transiently assembled on the scaffold proteins ISU1 and ISU2. In a second step, the cluster is released from ISU1/ISU2, transferred to glutaredoxin GRX5, followed by the formation of mitochondrial [2Fe-2S] proteins, the synthesis of [4Fe-4S] clusters and their target-specific insertion into the recipient apoproteins. Cluster assembly on ISU1/ISU2 depends on the function of the cysteine desulfurase complex NFS1-ISD11, which serves as the sulfur donor for cluster synthesis, the iron-binding protein frataxin (YFH1) as the putative iron donor, and the electron transfer chain comprised of ferredoxin reductase ARH1 and ferredoxin YAH1, which receive their electrons from NADH. Fe-S cluster release from ISU1/ISU2 is achieved by interaction with the Hsp70 chaperone SSQ1, assisted by the DnaJ-like co-chaperone JAC1 and the nucleotide exchange factor MGE1. ISU1 is the major isoform in yeast, while ISU2 is not detectable in cells grown to stationary phase. Also involved in production of a sulfur precursor required for thiolation of cytoplasmic tRNAs. The chain is Iron sulfur cluster assembly protein 1, mitochondrial from Saccharomyces cerevisiae (strain ATCC 204508 / S288c) (Baker's yeast).